The sequence spans 404 residues: N-acetylglucosamine-6-phosphate deacetylase (404 aa).

Glu-143 lines the a divalent metal cation pocket. 154 to 155 contributes to the substrate binding site; that stretch reads AH. The a divalent metal cation site is built by His-211 and His-232. Substrate contacts are provided by residues 235-236, Arg-243, and 269-272; these read NA and DGIH. Catalysis depends on Asp-294, which acts as the Proton donor/acceptor. 328–330 serves as a coordination point for substrate; the sequence is LSG.

Belongs to the metallo-dependent hydrolases superfamily. NagA family. It depends on a divalent metal cation as a cofactor.

It carries out the reaction N-acetyl-D-glucosamine 6-phosphate + H2O = D-glucosamine 6-phosphate + acetate. It functions in the pathway amino-sugar metabolism; N-acetylneuraminate degradation. In terms of biological role, hydrolyzes the N-glycolyl group from N-glycolylglucosamine 6-phosphate (GlcNGc-6-P) in the N-glycolylneuraminic acid (Neu5Gc) degradation pathway. In Danio rerio (Zebrafish), this protein is N-acetylglucosamine-6-phosphate deacetylase (amdhd2).